We begin with the raw amino-acid sequence, 642 residues long: Threonine--tRNA ligase (642 aa).

The 61-residue stretch at 1 to 61 (MPVITLPDGS…ETDVDLAIIT (61 aa)) folds into the TGS domain. Residues 243–534 (DHRKIGKQLD…LIEEYAGKFP (292 aa)) form a catalytic region. Residues C334, H385, and H511 each contribute to the Zn(2+) site.

The protein belongs to the class-II aminoacyl-tRNA synthetase family. Homodimer. Requires Zn(2+) as cofactor.

Its subcellular location is the cytoplasm. It carries out the reaction tRNA(Thr) + L-threonine + ATP = L-threonyl-tRNA(Thr) + AMP + diphosphate + H(+). Its function is as follows. Catalyzes the attachment of threonine to tRNA(Thr) in a two-step reaction: L-threonine is first activated by ATP to form Thr-AMP and then transferred to the acceptor end of tRNA(Thr). Also edits incorrectly charged L-seryl-tRNA(Thr). The sequence is that of Threonine--tRNA ligase from Shewanella loihica (strain ATCC BAA-1088 / PV-4).